The chain runs to 394 residues: NAC domain-containing protein 3 (394 aa).

The NAC domain occupies 3–147 (TPVGLRFCPT…TYTLCKVMFN (145 aa)). The DNA-binding element occupies 104–153 (IGEKKILMFYTSKESKSDWVIHEYHGFSHNQMMMTYTLCKVMFNGGMREK). Disordered regions lie at residues 152–173 (EKSS…RRDS) and 264–300 (NSLT…CDSF). The span at 155–165 (SSSPSSSGVSG) shows a compositional bias: low complexity. Positions 286 to 300 (PKTNSIQTSSTCDSF) are enriched in polar residues.

The protein resides in the nucleus. This chain is NAC domain-containing protein 3 (NAC003), found in Arabidopsis thaliana (Mouse-ear cress).